Reading from the N-terminus, the 304-residue chain is HTH-type transcriptional regulator TtuA (304 aa).

The HTH lysR-type domain maps to 1-58 (MELEQLKCFVAAAEELHFGRAAQKMGILPASLGRHLRLLEESLGTRLMSRTTRSVALT). The segment at residues 18–37 (FGRAAQKMGILPASLGRHLR) is a DNA-binding region (H-T-H motif).

This sequence belongs to the LysR transcriptional regulatory family.

Functionally, transcriptional regulator of the ttuABCDE tartrate utilization operon. The chain is HTH-type transcriptional regulator TtuA (ttuA) from Agrobacterium vitis (Rhizobium vitis).